We begin with the raw amino-acid sequence, 282 residues long: Putative 23S rRNA (guanine-N(1)-)-methyltransferase YxjB (282 aa).

Positions 12, 15, 29, and 34 each coordinate Zn(2+). Glutamate 103–glycine 104 serves as a coordination point for S-adenosyl-L-methionine.

This sequence belongs to the methyltransferase superfamily. RlmA family.

This Bacillus subtilis (strain 168) protein is Putative 23S rRNA (guanine-N(1)-)-methyltransferase YxjB (yxjB).